We begin with the raw amino-acid sequence, 294 residues long: Cytidine deaminase (294 aa).

CMP/dCMP-type deaminase domains lie at 48-168 and 186-294; these read DEDA…FGPK and LTGD…VLLA. Residue 89–91 coordinates substrate; it reads NME. His-102 contributes to the Zn(2+) binding site. Glu-104 acts as the Proton donor in catalysis. Residues Cys-129 and Cys-132 each coordinate Zn(2+).

The protein belongs to the cytidine and deoxycytidylate deaminase family. Homodimer. It depends on Zn(2+) as a cofactor.

It catalyses the reaction cytidine + H2O + H(+) = uridine + NH4(+). The enzyme catalyses 2'-deoxycytidine + H2O + H(+) = 2'-deoxyuridine + NH4(+). In terms of biological role, this enzyme scavenges exogenous and endogenous cytidine and 2'-deoxycytidine for UMP synthesis. The sequence is that of Cytidine deaminase from Escherichia coli (strain K12).